A 173-amino-acid chain; its full sequence is Mediator of RNA polymerase II transcription subunit 10 (173 aa).

Polar residues predominate over residues 1-20 (MDPNSPMFQNTPQQPMSLQR). Residues 1–45 (MDPNSPMFQNTPQQPMSLQRSVDDRIDRERTAKKEKDDEKKKQED) form a disordered region. A compositionally biased stretch (basic and acidic residues) spans 21 to 45 (SVDDRIDRERTAKKEKDDEKKKQED).

It belongs to the Mediator complex subunit 10 family. Component of the Mediator complex.

Its subcellular location is the nucleus. Functionally, component of the Mediator complex, a coactivator involved in the regulated transcription of nearly all RNA polymerase II-dependent genes. Mediator functions as a bridge to convey information from gene-specific regulatory proteins to the basal RNA polymerase II transcription machinery. Mediator is recruited to promoters by direct interactions with regulatory proteins and serves as a scaffold for the assembly of a functional preinitiation complex with RNA polymerase II and the general transcription factors. The chain is Mediator of RNA polymerase II transcription subunit 10 (mdt-10) from Caenorhabditis briggsae.